A 217-amino-acid chain; its full sequence is UPF0173 metal-dependent hydrolase MJ1163 (217 aa).

This sequence belongs to the UPF0173 family.

The polypeptide is UPF0173 metal-dependent hydrolase MJ1163 (Methanocaldococcus jannaschii (strain ATCC 43067 / DSM 2661 / JAL-1 / JCM 10045 / NBRC 100440) (Methanococcus jannaschii)).